The primary structure comprises 408 residues: MNTTDSGVNCLCAICGDRATGKHYGASSCDGCKGFFRRSIRKSHVYSCRFSRQCVVDKDKRNQCRYCRLRKCFRAGMKKEAVQNERDRISTRRSTYEGSNIPSINTLAQAEVRSCQISVPSPSSSTDINIKKIASISDVCESMKQQLLVLVEWAKYIPAFCELPLDDQVALLRAHAGEHLLLGATKRSMMYKDILLLGNHYVIHRNSCEVEVSRVANRVLDELVRPFQEIQIDDNEYACLKAIVFFDPDAKGLSDPVKIKNMRFQVQISLEDYINDRQYDSRGRFGELLLLLPTLQSITWQMIEQIQFVKLFGMVKIDNLLQEMLLGGAANDGSHLHHPMHPHLSQDPLTGQTILLGPMSTLVHTDQIATPETPLPSPPQGSGQEPYKITANQASVISHQSLSKQKQL.

The nuclear receptor DNA-binding region spans 9-84 (NCLCAICGDR…AGMKKEAVQN (76 aa)). NR C4-type zinc fingers lie at residues 12–32 (CAICGDRATGKHYGASSCDGC) and 48–72 (CRFSRQCVVDKDKRNQCRYCRLRKC). A Phosphoserine modification is found at Ser94. Residues 99–328 (SNIPSINTLA…NLLQEMLLGG (230 aa)) enclose the NR LBD domain. Residues 369 to 408 (ATPETPLPSPPQGSGQEPYKITANQASVISHQSLSKQKQL) are disordered. Phosphothreonine occurs at positions 370 and 373. At Ser377 the chain carries Phosphoserine. The span at 390–408 (TANQASVISHQSLSKQKQL) shows a compositional bias: polar residues.

The protein belongs to the nuclear hormone receptor family. NR2 subfamily.

The protein localises to the nucleus. Its function is as follows. Transcription factor. Has a lower transcription activation potential than HNF4-alpha. This Mus musculus (Mouse) protein is Hepatocyte nuclear factor 4-gamma (Hnf4g).